The sequence spans 471 residues: Methylenetetrahydrofolate--tRNA-(uracil-5-)-methyltransferase TrmFO (471 aa).

9–14 (GGGLSG) is a binding site for FAD.

This sequence belongs to the MnmG family. TrmFO subfamily. FAD is required as a cofactor.

The protein localises to the cytoplasm. It catalyses the reaction uridine(54) in tRNA + (6R)-5,10-methylene-5,6,7,8-tetrahydrofolate + NADH + H(+) = 5-methyluridine(54) in tRNA + (6S)-5,6,7,8-tetrahydrofolate + NAD(+). The enzyme catalyses uridine(54) in tRNA + (6R)-5,10-methylene-5,6,7,8-tetrahydrofolate + NADPH + H(+) = 5-methyluridine(54) in tRNA + (6S)-5,6,7,8-tetrahydrofolate + NADP(+). Functionally, catalyzes the folate-dependent formation of 5-methyl-uridine at position 54 (M-5-U54) in all tRNAs. This Beijerinckia indica subsp. indica (strain ATCC 9039 / DSM 1715 / NCIMB 8712) protein is Methylenetetrahydrofolate--tRNA-(uracil-5-)-methyltransferase TrmFO.